The following is a 303-amino-acid chain: Dihydroorotate dehydrogenase B (NAD(+)), catalytic subunit (303 aa).

Residues Ser23 and 47–48 contribute to the FMN site; that span reads KS. Substrate-binding positions include Lys47, 71–75, and Asn125; that span reads NAMGL. Asn125 serves as a coordination point for FMN. The Nucleophile role is filled by Cys128. 2 residues coordinate FMN: Lys163 and Ile189. Residue 190 to 191 participates in substrate binding; sequence NT. Residues Gly215, 241–242, and 263–264 contribute to the FMN site; these read GG and GT.

This sequence belongs to the dihydroorotate dehydrogenase family. Type 1 subfamily. As to quaternary structure, heterotetramer of 2 PyrK and 2 PyrD type B subunits. FMN is required as a cofactor.

It localises to the cytoplasm. It catalyses the reaction (S)-dihydroorotate + NAD(+) = orotate + NADH + H(+). The protein operates within pyrimidine metabolism; UMP biosynthesis via de novo pathway; orotate from (S)-dihydroorotate (NAD(+) route): step 1/1. Its function is as follows. Catalyzes the conversion of dihydroorotate to orotate with NAD(+) as electron acceptor. In Pyrococcus horikoshii (strain ATCC 700860 / DSM 12428 / JCM 9974 / NBRC 100139 / OT-3), this protein is Dihydroorotate dehydrogenase B (NAD(+)), catalytic subunit (pyrD).